The sequence spans 677 residues: Membrane-associated tyrosine- and threonine-specific cdc2-inhibitory kinase wee-1.3 (677 aa).

Residues 1–22 (MDDTEGNSSMDSIRNGQSSPLP) show a composition bias toward polar residues. The tract at residues 1–30 (MDDTEGNSSMDSIRNGQSSPLPQVTPRLPQ) is disordered. The 248-residue stretch at 108-355 (FQIDEIIGRG…SRDLLDHPVI (248 aa)) folds into the Protein kinase domain. ATP-binding positions include 114-122 (IGRGSFGEV) and Lys137. The active-site Proton acceptor is the Asp228. Positions 233 and 246 each coordinate Mg(2+). Disordered stretches follow at residues 478–526 (FDND…GTPR) and 632–677 (EPSN…GDEV). The segment covering 489-499 (ATCSSSNSSAI) has biased composition (polar residues). Basic and acidic residues predominate over residues 638-652 (TVDHHTILEQSESPR).

The protein belongs to the protein kinase superfamily. Ser/Thr protein kinase family. WEE1 subfamily.

The protein resides in the golgi apparatus membrane. It localises to the cytoplasm. It catalyses the reaction L-seryl-[protein] + ATP = O-phospho-L-seryl-[protein] + ADP + H(+). The catalysed reaction is L-threonyl-[protein] + ATP = O-phospho-L-threonyl-[protein] + ADP + H(+). In terms of biological role, acts as a negative regulator of entry into mitosis (G2 to M transition) by phosphorylation of the CDK1 kinase during oocyte maturation. Required for oocyte maturation, embryonic development, germline proliferation and initiation of meiosis during spermatogenesis. Required for chromosome structure during mitosis and negative regulation of nuclear envelope breakdown. The chain is Membrane-associated tyrosine- and threonine-specific cdc2-inhibitory kinase wee-1.3 (wee-1.3) from Caenorhabditis elegans.